A 131-amino-acid chain; its full sequence is UPF0102 protein YraN (131 aa).

The interval 1–20 is disordered; the sequence is MATVPTRSGSPRQLTTKQTG.

It belongs to the UPF0102 family.

This Escherichia coli O139:H28 (strain E24377A / ETEC) protein is UPF0102 protein YraN.